Consider the following 379-residue polypeptide: Epoxyqueuosine reductase (379 aa).

Catalysis depends on D139, which acts as the Proton donor. Residues 181-213 (IPLPVDQPVEEGCGKCVACMTICPTGAIVEPYT) form the 4Fe-4S ferredoxin-type domain. [4Fe-4S] cluster is bound by residues C193, C196, C199, C203, C219, C246, C249, and C253.

The protein belongs to the QueG family. In terms of assembly, monomer. Requires cob(II)alamin as cofactor. [4Fe-4S] cluster is required as a cofactor.

The protein resides in the cytoplasm. The enzyme catalyses epoxyqueuosine(34) in tRNA + AH2 = queuosine(34) in tRNA + A + H2O. It functions in the pathway tRNA modification; tRNA-queuosine biosynthesis. Its function is as follows. Catalyzes the conversion of epoxyqueuosine (oQ) to queuosine (Q), which is a hypermodified base found in the wobble positions of tRNA(Asp), tRNA(Asn), tRNA(His) and tRNA(Tyr). This chain is Epoxyqueuosine reductase, found in Escherichia coli (strain K12).